The chain runs to 316 residues: L-lactate dehydrogenase (316 aa).

NAD(+) is bound by residues V16, D37, K42, Y68, and 82–83 (GA). 2 residues coordinate substrate: Q85 and R91. NAD(+)-binding positions include S104, 121 to 123 (AAN), and S146. Substrate is bound at residue 123-126 (NPVD). Residue 151 to 154 (DSAR) coordinates substrate. R156 and H171 together coordinate beta-D-fructose 1,6-bisphosphate. The active-site Proton acceptor is the H178. Phosphotyrosine is present on Y222. T231 contributes to the substrate binding site.

This sequence belongs to the LDH/MDH superfamily. LDH family. As to quaternary structure, homotetramer.

The protein resides in the cytoplasm. The catalysed reaction is (S)-lactate + NAD(+) = pyruvate + NADH + H(+). It functions in the pathway fermentation; pyruvate fermentation to lactate; (S)-lactate from pyruvate: step 1/1. Its activity is regulated as follows. Allosterically activated by fructose 1,6-bisphosphate (FBP). Its function is as follows. Catalyzes the conversion of lactate to pyruvate. The polypeptide is L-lactate dehydrogenase (Staphylococcus epidermidis (strain ATCC 12228 / FDA PCI 1200)).